Here is a 313-residue protein sequence, read N- to C-terminus: Ribosomal RNA small subunit methyltransferase H (313 aa).

Residues 35-37 (GGH), D55, F79, D101, and Q108 each bind S-adenosyl-L-methionine.

Belongs to the methyltransferase superfamily. RsmH family.

It localises to the cytoplasm. The catalysed reaction is cytidine(1402) in 16S rRNA + S-adenosyl-L-methionine = N(4)-methylcytidine(1402) in 16S rRNA + S-adenosyl-L-homocysteine + H(+). Its function is as follows. Specifically methylates the N4 position of cytidine in position 1402 (C1402) of 16S rRNA. The chain is Ribosomal RNA small subunit methyltransferase H from Edwardsiella ictaluri (strain 93-146).